The following is a 943-amino-acid chain: UvrABC system protein A (943 aa).

An ATP-binding site is contributed by 31–38 (GLSGSGKS). A C4-type zinc finger spans residues 253–280 (CPHCGYSVPELEPRLFSFNNPAGACPTC). ABC transporter domains lie at 310 to 587 (WDRR…PHSI) and 607 to 937 (LDKK…RFLK). ATP is bound at residue 640–647 (GVSGSGKS). The segment at 740-766 (CEACQGDGVIKVEMHFLPDVYVPCEQC) adopts a C4-type zinc-finger fold.

The protein belongs to the ABC transporter superfamily. UvrA family. Forms a heterotetramer with UvrB during the search for lesions.

It is found in the cytoplasm. Its function is as follows. The UvrABC repair system catalyzes the recognition and processing of DNA lesions. UvrA is an ATPase and a DNA-binding protein. A damage recognition complex composed of 2 UvrA and 2 UvrB subunits scans DNA for abnormalities. When the presence of a lesion has been verified by UvrB, the UvrA molecules dissociate. The polypeptide is UvrABC system protein A (Pasteurella multocida (strain Pm70)).